A 149-amino-acid chain; its full sequence is NADH-quinone oxidoreductase subunit A (149 aa).

The next 3 helical transmembrane spans lie at 16-36 (FAVF…GAFF), 68-88 (FYLV…LYAW), and 98-118 (LGFI…FYLV).

The protein belongs to the complex I subunit 3 family. As to quaternary structure, NDH-1 is composed of 13 different subunits. Subunits NuoA, H, J, K, L, M, N constitute the membrane sector of the complex.

The protein localises to the cell inner membrane. It carries out the reaction a quinone + NADH + 5 H(+)(in) = a quinol + NAD(+) + 4 H(+)(out). Functionally, NDH-1 shuttles electrons from NADH, via FMN and iron-sulfur (Fe-S) centers, to quinones in the respiratory chain. The immediate electron acceptor for the enzyme in this species is believed to be ubiquinone. Couples the redox reaction to proton translocation (for every two electrons transferred, four hydrogen ions are translocated across the cytoplasmic membrane), and thus conserves the redox energy in a proton gradient. In Photorhabdus laumondii subsp. laumondii (strain DSM 15139 / CIP 105565 / TT01) (Photorhabdus luminescens subsp. laumondii), this protein is NADH-quinone oxidoreductase subunit A.